Consider the following 166-residue polypeptide: Crossover junction endodeoxyribonuclease RuvC (166 aa).

Catalysis depends on residues Asp-11, Glu-71, and Asp-142. Mg(2+)-binding residues include Asp-11, Glu-71, and Asp-142.

Belongs to the RuvC family. Homodimer which binds Holliday junction (HJ) DNA. The HJ becomes 2-fold symmetrical on binding to RuvC with unstacked arms; it has a different conformation from HJ DNA in complex with RuvA. In the full resolvosome a probable DNA-RuvA(4)-RuvB(12)-RuvC(2) complex forms which resolves the HJ. The cofactor is Mg(2+).

It is found in the cytoplasm. It catalyses the reaction Endonucleolytic cleavage at a junction such as a reciprocal single-stranded crossover between two homologous DNA duplexes (Holliday junction).. In terms of biological role, the RuvA-RuvB-RuvC complex processes Holliday junction (HJ) DNA during genetic recombination and DNA repair. Endonuclease that resolves HJ intermediates. Cleaves cruciform DNA by making single-stranded nicks across the HJ at symmetrical positions within the homologous arms, yielding a 5'-phosphate and a 3'-hydroxyl group; requires a central core of homology in the junction. The consensus cleavage sequence is 5'-(A/T)TT(C/G)-3'. Cleavage occurs on the 3'-side of the TT dinucleotide at the point of strand exchange. HJ branch migration catalyzed by RuvA-RuvB allows RuvC to scan DNA until it finds its consensus sequence, where it cleaves and resolves the cruciform DNA. The sequence is that of Crossover junction endodeoxyribonuclease RuvC from Maricaulis maris (strain MCS10) (Caulobacter maris).